The following is a 531-amino-acid chain: Histone-arginine methyltransferase CARMER (531 aa).

One can recognise an SAM-dependent MTase PRMT-type domain in the interval 141-450 (ASQYFQFYGY…QSYDVTIDLH (310 aa)). Positions 154, 163, 187, 209, 238, and 266 each coordinate S-adenosyl-L-methionine. Position 501 is an asymmetric dimethylarginine; by autocatalysis (Arg-501).

The protein belongs to the class I-like SAM-binding methyltransferase superfamily. Protein arginine N-methyltransferase family. In terms of assembly, homodimer. The dimethylated protein is the major form.

The protein resides in the cytoplasm. The protein localises to the nucleus. It catalyses the reaction L-arginyl-[protein] + 2 S-adenosyl-L-methionine = N(omega),N(omega)-dimethyl-L-arginyl-[protein] + 2 S-adenosyl-L-homocysteine + 2 H(+). In terms of biological role, methylates (mono- and asymmetric dimethylation) the guanidino nitrogens of arginyl residues in proteins. May methylate histone H3 at 'Arg-17' and activate transcription via chromatin remodeling. This Drosophila ananassae (Fruit fly) protein is Histone-arginine methyltransferase CARMER (Art4).